Reading from the N-terminus, the 241-residue chain is Tumor necrosis factor receptor superfamily member 18 (241 aa).

The N-terminal stretch at 1 to 25 (MAQHGAMGAFRALCGLALLCALSLG) is a signal peptide. The Extracellular portion of the chain corresponds to 26–162 (QRPTGGPGCG…CVPGSPPAEP (137 aa)). Cystine bridges form between Cys34/Cys49, Cys74/Cys86, Cys81/Cys94, Cys115/Cys134, and Cys128/Cys153. TNFR-Cys repeat units lie at residues 34-72 (CGPG…EWDC), 74-112 (CVQP…GFQC), and 115-153 (CASG…NAVC). A glycan (N-linked (GlcNAc...) asparagine) is linked at Asn146. The chain crosses the membrane as a helical span at residues 163 to 183 (LGWLTVVLLAVAACVLLLTSA). Over 184 to 241 (QLGLHIWQLRSQCMWPRETQLLLEVPPSTEDARSCQFPEEERGERSAEEKGRLGDLWV) the chain is Cytoplasmic. The disordered stretch occupies residues 214–241 (DARSCQFPEEERGERSAEEKGRLGDLWV). Residues 222–241 (EEERGERSAEEKGRLGDLWV) are compositionally biased toward basic and acidic residues.

Binds to TRAF1, TRAF2, and TRAF3, but not TRAF5 and TRAF6. Binds through its C-terminus to SIVA1/SIVA. In terms of tissue distribution, expressed in lymph node, peripheral blood leukocytes and weakly in spleen.

The protein localises to the cell membrane. It is found in the secreted. Its function is as follows. Receptor for TNFSF18. Seems to be involved in interactions between activated T-lymphocytes and endothelial cells and in the regulation of T-cell receptor-mediated cell death. Mediated NF-kappa-B activation via the TRAF2/NIK pathway. The polypeptide is Tumor necrosis factor receptor superfamily member 18 (TNFRSF18) (Homo sapiens (Human)).